Consider the following 343-residue polypeptide: 3-dehydroquinate synthase (343 aa).

Residues 86–90 (GALLD), 110–111 (TT), Lys123, and Lys132 contribute to the NAD(+) site. The Zn(2+) site is built by Glu165, His229, and His243.

It belongs to the sugar phosphate cyclases superfamily. Dehydroquinate synthase family. Co(2+) serves as cofactor. Requires Zn(2+) as cofactor. NAD(+) is required as a cofactor.

It localises to the cytoplasm. The enzyme catalyses 7-phospho-2-dehydro-3-deoxy-D-arabino-heptonate = 3-dehydroquinate + phosphate. Its pathway is metabolic intermediate biosynthesis; chorismate biosynthesis; chorismate from D-erythrose 4-phosphate and phosphoenolpyruvate: step 2/7. In terms of biological role, catalyzes the conversion of 3-deoxy-D-arabino-heptulosonate 7-phosphate (DAHP) to dehydroquinate (DHQ). In Pyrobaculum neutrophilum (strain DSM 2338 / JCM 9278 / NBRC 100436 / V24Sta) (Thermoproteus neutrophilus), this protein is 3-dehydroquinate synthase.